The primary structure comprises 394 residues: Elongation factor Tu (394 aa).

The 196-residue stretch at 10–205 folds into the tr-type G domain; it reads KPHMNVGTIG…SMDNYFDLPE (196 aa). Residues 19 to 26 are G1; that stretch reads GHVDHGKT. Residue 19-26 coordinates GTP; that stretch reads GHVDHGKT. Threonine 26 provides a ligand contact to Mg(2+). Residues 61–65 form a G2 region; that stretch reads GITIN. The interval 82 to 85 is G3; sequence DCPG. GTP is bound by residues 82–86 and 137–140; these read DCPGH and NKLD. The G4 stretch occupies residues 137–140; the sequence is NKLD. Residues 173–175 are G5; that stretch reads SAF.

The protein belongs to the TRAFAC class translation factor GTPase superfamily. Classic translation factor GTPase family. EF-Tu/EF-1A subfamily. Monomer.

The protein resides in the cytoplasm. It catalyses the reaction GTP + H2O = GDP + phosphate + H(+). GTP hydrolase that promotes the GTP-dependent binding of aminoacyl-tRNA to the A-site of ribosomes during protein biosynthesis. The polypeptide is Elongation factor Tu (Borreliella burgdorferi (strain ATCC 35210 / DSM 4680 / CIP 102532 / B31) (Borrelia burgdorferi)).